Consider the following 527-residue polypeptide: Catalase (527 aa).

At A2 the chain carries N-acetylalanine. Position 9 is a phosphoserine (S9). K13 carries the post-translational modification N6-succinyllysine. Residues H75 and N148 contribute to the active site. NADP(+)-binding residues include H194, S201, R203, and N213. K221 carries the post-translational modification N6-succinyllysine. At K233 the chain carries N6-acetyllysine. Positions 237, 303, 305, and 306 each coordinate NADP(+). Position 306 is an N6-acetyllysine; alternate (K306). Residue K306 is modified to N6-succinyllysine; alternate. Y358 lines the heme pocket. Phosphoserine occurs at positions 417 and 422. K480 carries the N6-acetyllysine; alternate modification. N6-succinyllysine; alternate is present on K480. K499 is subject to N6-acetyllysine. T511 carries the phosphothreonine modification. 2 positions are modified to phosphoserine: S515 and S517. Positions 524–527 (KANL) match the Microbody targeting signal; atypical motif.

Belongs to the catalase family. As to quaternary structure, homotetramer. Interacts (via microbody targeting signal) with PEX5, monomeric form interacts with PEX5, leading to its translocation into peroxisomes. It depends on heme as a cofactor. Requires NADP(+) as cofactor.

Its subcellular location is the peroxisome matrix. It carries out the reaction 2 H2O2 = O2 + 2 H2O. In terms of biological role, catalyzes the degradation of hydrogen peroxide (H(2)O(2)) generated by peroxisomal oxidases to water and oxygen, thereby protecting cells from the toxic effects of hydrogen peroxide. Promotes growth of cells including T-cells, B-cells, myeloid leukemia cells, melanoma cells, mastocytoma cells and normal and transformed fibroblast cells. The protein is Catalase (CAT) of Pongo abelii (Sumatran orangutan).